Here is a 363-residue protein sequence, read N- to C-terminus: Crh-like protein 3 (363 aa).

An N-terminal signal peptide occupies residues 1-19 (MSLLYLVALFVASICSVTA). Cys-25 and Cys-32 are joined by a disulfide. The region spanning 26–237 (NPLTTTCPPD…YSKAPFTMVL (212 aa)) is the GH16 domain. 3 N-linked (GlcNAc...) asparagine glycosylation sites follow: Asn-41, Asn-47, and Asn-56. The Nucleophile role is filled by Glu-118. Glu-122 functions as the Proton donor in the catalytic mechanism. Glu-122 lines the chitin pocket. 3 N-linked (GlcNAc...) asparagine glycosylation sites follow: Asn-127, Asn-141, and Asn-161. Chitin-binding residues include Arg-203, Trp-207, and Thr-218. Residues Asn-252 and Asn-269 are each glycosylated (N-linked (GlcNAc...) asparagine). Residues 298–318 (VYIGAGCVGAALLAGFIFFFI) form a helical membrane-spanning segment.

The protein belongs to the glycosyl hydrolase 16 family. CRH1 subfamily. Post-translationally, the GPI-like anchor contains a phosphoceramide lipid group. The anchor position has not been determined.

It is found in the cell membrane. Its subcellular location is the secreted. It localises to the cell wall. It carries out the reaction Random endo-hydrolysis of N-acetyl-beta-D-glucosaminide (1-&gt;4)-beta-linkages in chitin and chitodextrins.. Functionally, dual chitinase/transglycosylase that plays a role in cell wall architecture. Chitinase and transglycosylase activities are coupled. Required for the polysaccharide cross-linking at the septa and the cell wall. More specifically, transfers chitin to 1,6-beta-glucan in the cell wall. In Aspergillus fumigatus (strain ATCC MYA-4609 / CBS 101355 / FGSC A1100 / Af293) (Neosartorya fumigata), this protein is Crh-like protein 3.